A 376-amino-acid polypeptide reads, in one-letter code: C-type lectin domain family 4 member M (376 aa).

Residues methionine 1–glycine 49 are Cytoplasmic-facing. The short motif at leucine 14–leucine 15 is the Endocytosis signal element. Residues alanine 50–valine 70 form a helical; Signal-anchor for type II membrane protein membrane-spanning segment. Over glutamine 71 to glutamate 376 the chain is Extracellular. An N-linked (GlcNAc...) asparagine glycan is attached at asparagine 92. 6 repeat units span residues lysine 108 to serine 130, lysine 131 to serine 153, lysine 154 to serine 176, lysine 177 to serine 199, lysine 200 to serine 222, and lysine 223 to cysteine 245. The interval lysine 108–proline 246 is 6 X approximate tandem repeats. 4 disulfides stabilise this stretch: cysteine 242–cysteine 372, cysteine 245–cysteine 256, cysteine 273–cysteine 366, and cysteine 345–cysteine 358. Positions phenylalanine 251–lysine 367 constitute a C-type lectin domain. Glutamate 336, asparagine 338, serine 340, glutamate 343, asparagine 354, and aspartate 355 together coordinate Ca(2+). A glycan (N-linked (GlcNAc...) asparagine) is linked at asparagine 338.

Homotetramer.

The protein localises to the membrane. Functionally, probable pathogen-recognition receptor involved in peripheral immune surveillance in liver. May mediate the endocytosis of pathogens which are subsequently degraded in lysosomal compartments. Probably recognizes in a calcium-dependent manner high mannose N-linked oligosaccharides in a variety of pathogen antigens. Is a receptor for ICAM3, probably by binding to mannose-like carbohydrates. The polypeptide is C-type lectin domain family 4 member M (CLEC4M) (Gorilla gorilla gorilla (Western lowland gorilla)).